Reading from the N-terminus, the 80-residue chain is Toxin Acra I-2 (80 aa).

Residues 1-22 (MMKLALFSIIVILFSLIGSIHG) form the signal peptide. The 56-residue stretch at 25 to 80 (VPGNYPLDSSGNKYPCTVLGDNQSCIDVCKKHGVKYGYCYSFKCWCEFLEDKNVSI) folds into the LCN-type CS-alpha/beta domain. 3 cysteine pairs are disulfide-bonded: C40-C63, C49-C68, and C53-C70.

Expressed by the venom gland.

Its subcellular location is the secreted. Its function is as follows. Probable neurotoxin that inhibits ion channels. Is toxic to mice. Is about 2.8% of the total protein in the venom. In Androctonus crassicauda (Arabian fat-tailed scorpion), this protein is Toxin Acra I-2.